We begin with the raw amino-acid sequence, 495 residues long: MRRSMPLAQLLPDIPQARDVVISGLVMDSREVQPGDAFVAVAGFGAHGLCFIEDACARGAVAILFEPPAPQGVSVPDGAIAVHGLRARLGAMADRFHGHPSQAMTMVGVTGTNGKTSTVQLLAQAWHCLGVRSATCGTLGVGLYDQVVPTGFTTPLVLQLHQCLAQLRDEGAQAVAMEVSSHALDQGRVDGVHYDVVVFTNLTRDHLDYHGDMEHYGAAKARLFAHQDVQAAVINVDDPFGLRLLHGLAKGMRRVGVSVCGHTDADVMAQHLSLNLQGIGFDLVIGADHASVRSPLMGRFNVDNLLAVAGVLYALNYALSEIAAVLSTLRPIHGRMNRLGGQDGQPVVVVDYAHTPDALGQVLSSLSSHVCGRLICVFGCGGERDRGKRSQMAVIAESNADVVFVTDDNPRGEDGDGIVADILAGFARPNVVKVQRDRSAAIAAAIGIASAEDVVLIAGKGHERYQEVAGVRHPFDDTEVARRVLAAMSAQETVR.

Position 29 (serine 29) interacts with UDP-N-acetyl-alpha-D-muramoyl-L-alanyl-D-glutamate. ATP is bound at residue glycine 111–serine 117. Residues threonine 153 to threonine 154, serine 180, glutamine 186, and arginine 188 contribute to the UDP-N-acetyl-alpha-D-muramoyl-L-alanyl-D-glutamate site. Lysine 220 is modified (N6-carboxylysine). Residues arginine 384, aspartate 408 to arginine 411, glycine 459, and glutamate 463 contribute to the meso-2,6-diaminopimelate site. The Meso-diaminopimelate recognition motif signature appears at aspartate 408–arginine 411.

This sequence belongs to the MurCDEF family. MurE subfamily. Mg(2+) is required as a cofactor. Post-translationally, carboxylation is probably crucial for Mg(2+) binding and, consequently, for the gamma-phosphate positioning of ATP.

The protein resides in the cytoplasm. It carries out the reaction UDP-N-acetyl-alpha-D-muramoyl-L-alanyl-D-glutamate + meso-2,6-diaminopimelate + ATP = UDP-N-acetyl-alpha-D-muramoyl-L-alanyl-gamma-D-glutamyl-meso-2,6-diaminopimelate + ADP + phosphate + H(+). It functions in the pathway cell wall biogenesis; peptidoglycan biosynthesis. Functionally, catalyzes the addition of meso-diaminopimelic acid to the nucleotide precursor UDP-N-acetylmuramoyl-L-alanyl-D-glutamate (UMAG) in the biosynthesis of bacterial cell-wall peptidoglycan. The chain is UDP-N-acetylmuramoyl-L-alanyl-D-glutamate--2,6-diaminopimelate ligase from Xylella fastidiosa (strain 9a5c).